A 70-amino-acid polypeptide reads, in one-letter code: Putative defensin-like protein 280 (70 aa).

A signal peptide spans 1 to 23; sequence MASIKHFFLVFICVSVLLTSGLA. 3 disulfides stabilise this stretch: cysteine 30-cysteine 53, cysteine 39-cysteine 65, and cysteine 43-cysteine 67.

The protein belongs to the DEFL family.

The protein localises to the secreted. The sequence is that of Putative defensin-like protein 280 from Arabidopsis thaliana (Mouse-ear cress).